We begin with the raw amino-acid sequence, 348 residues long: Dihydroorotase (348 aa).

Positions 17 and 19 each coordinate Zn(2+). Substrate is bound by residues 19–21 and Asn45; that span reads HLR. Lys103, His140, and His178 together coordinate Zn(2+). Lys103 carries the N6-carboxylysine modification. His140 serves as a coordination point for substrate. A substrate-binding site is contributed by Leu223. Asp251 contacts Zn(2+). Residue Asp251 is part of the active site. Residues His255 and Ala267 each contribute to the substrate site.

It belongs to the metallo-dependent hydrolases superfamily. DHOase family. Class II DHOase subfamily. As to quaternary structure, homodimer. Zn(2+) is required as a cofactor. The cofactor is Co(2+). Mg(2+) serves as cofactor. Requires Ni(2+) as cofactor.

It carries out the reaction (S)-dihydroorotate + H2O = N-carbamoyl-L-aspartate + H(+). It participates in pyrimidine metabolism; UMP biosynthesis via de novo pathway; (S)-dihydroorotate from bicarbonate: step 3/3. Functionally, catalyzes the reversible cyclization of carbamoyl aspartate to dihydroorotate. This chain is Dihydroorotase, found in Klebsiella pneumoniae subsp. pneumoniae (strain ATCC 700721 / MGH 78578).